A 118-amino-acid chain; its full sequence is Galanin peptides (118 aa).

The first 19 residues, 1-19 (MHRCVGGVCVSLIVCAFLT), serve as a signal peptide directing secretion. Positions 20-30 (ETLGMVIAAKE) are excised as a propeptide. Alanine 61 is subject to Alanine amide.

This sequence belongs to the galanin family. As to expression, strongly expressed in brain and stomach, moderately in the eye, and very weakly in heart, kidney and gills. Not detected in liver.

Its subcellular location is the secreted. Functionally, endocrine hormone of the central and peripheral nervous systems that binds and activates the G protein-coupled receptors GALR1 (galr1a and galr1b) and GALR2 (galr2a and galr2b). This small neuropeptide may regulate diverse physiologic functions including contraction of smooth muscle of the gastrointestinal and genitourinary tract, growth hormone and insulin release and adrenal secretion. This Danio rerio (Zebrafish) protein is Galanin peptides.